Here is a 247-residue protein sequence, read N- to C-terminus: Submandibular gland secretory Glx-rich protein CB (247 aa).

The N-terminal stretch at 1 to 18 (MLVVLLTAALLALSSAQG) is a signal peptide. The segment at 14-219 (SSAQGTDEEV…PQHYRGRPPK (206 aa)) is disordered. 7 stretches are compositionally biased toward low complexity: residues 39 to 50 (PVDSGSDPPSAD), 58 to 71 (EGES…EPPA), 81 to 93 (QQEP…QEPP), 104 to 116 (QQEP…QEPP), 126 to 139 (QQQQ…QEPP), 150 to 159 (QQESTQAENQ), and 178 to 196 (VESP…QQTN). 5 repeat units span residues 67-89 (EEPP…QAEN), 90-112 (QEPP…QAEN), 113-135 (QEPP…QAEN), 136-158 (QEPP…QAEN), and 159-181 (QEPS…VESP). The tract at residues 67 to 181 (EEPPATSGSE…QPEEGNVESP (115 aa)) is 5 X 23 AA tandem repeats. Residues 197–212 (PEEKPPAPKTQEEPQH) are compositionally biased toward basic and acidic residues.

As to expression, submandibular gland acinar cells.

The protein resides in the secreted. In terms of biological role, GRP proteins have a marked affinity for hydroxyapatite. They may play a role in the formation of the protective acquired pellicle at the saliva-tooth interface. The sequence is that of Submandibular gland secretory Glx-rich protein CB (Grpcb) from Rattus norvegicus (Rat).